We begin with the raw amino-acid sequence, 124 residues long: Group 1 truncated hemoglobin GlbN (124 aa).

The heme site is built by histidine 46, histidine 70, and histidine 117.

The protein belongs to the truncated hemoglobin family. Group I subfamily. Monomer. Requires heme as cofactor.

Its function is as follows. Forms a very stable complex with oxygen. The oxygen dissociation rate is 0.011 sec(-1). The sequence is that of Group 1 truncated hemoglobin GlbN (glbN) from Synechocystis sp. (strain ATCC 27184 / PCC 6803 / Kazusa).